The following is a 47-amino-acid chain: LLCLQKYSPGRETSQTCLAGENICFKKWKKGEKTSRXGCAVTCPKXK.

2 disulfide bridges follow: C3/C24 and C17/C39.

Expressed by the venom gland.

The protein localises to the secreted. The sequence is that of Short neurotoxin D2A from Micrurus pyrrhocryptus (Coral snake).